A 206-amino-acid polypeptide reads, in one-letter code: Putative amino-acid transporter YggA (206 aa).

The next 6 helical transmembrane spans lie at 1-21 (MFATTLQGFTLGLAMIIPIGA), 37-57 (LLAATLCCLCDLILIGIGVFG), 65-85 (SPIGLALLTWGGVLFLCWFGI), 116-136 (LGVTLLNPHVYLDTLMLLGSF), 148-168 (FAAGAMLASLVWFYSLAFGAA), and 185-205 (TIVGLIMLGLALQLASGALLA).

This sequence belongs to the LysE/ArgO transporter (TC 2.A.75) family.

The protein localises to the cell membrane. The sequence is that of Putative amino-acid transporter YggA (yggA) from Aeromonas salmonicida.